A 255-amino-acid polypeptide reads, in one-letter code: Aliphatic sulfonates import ATP-binding protein SsuB (255 aa).

Residues 12-233 enclose the ABC transporter domain; that stretch reads LLLNAVSKHY…RLGSVRLAEL (222 aa). ATP is bound at residue 44–51; the sequence is GRSGGGKS.

The protein belongs to the ABC transporter superfamily. Aliphatic sulfonates importer (TC 3.A.1.17.2) family. In terms of assembly, the complex is composed of two ATP-binding proteins (SsuB), two transmembrane proteins (SsuC) and a solute-binding protein (SsuA).

It is found in the cell inner membrane. The catalysed reaction is ATP + H2O + aliphatic sulfonate-[sulfonate-binding protein]Side 1 = ADP + phosphate + aliphatic sulfonateSide 2 + [sulfonate-binding protein]Side 1.. Its function is as follows. Part of the ABC transporter complex SsuABC involved in aliphatic sulfonates import. Responsible for energy coupling to the transport system. In Shigella flexneri, this protein is Aliphatic sulfonates import ATP-binding protein SsuB.